Reading from the N-terminus, the 193-residue chain is Acyl carrier protein phosphodiesterase (193 aa).

It belongs to the AcpH family.

It catalyses the reaction holo-[ACP] + H2O = apo-[ACP] + (R)-4'-phosphopantetheine + H(+). Functionally, converts holo-ACP to apo-ACP by hydrolytic cleavage of the phosphopantetheine prosthetic group from ACP. This chain is Acyl carrier protein phosphodiesterase, found in Pectobacterium atrosepticum (strain SCRI 1043 / ATCC BAA-672) (Erwinia carotovora subsp. atroseptica).